A 503-amino-acid polypeptide reads, in one-letter code: Aminoaldehyde dehydrogenase 2, peroxisomal (503 aa).

Na(+)-binding residues include Ile28 and Asp99. NAD(+) contacts are provided by Trp161 and Lys185. Leu189 lines the Na(+) pocket. Ser239 serves as a coordination point for NAD(+). Glu260 (proton acceptor) is an active-site residue. Cys294 functions as the Nucleophile in the catalytic mechanism. The Microbody targeting signal signature appears at 501–503 (AKL).

Belongs to the aldehyde dehydrogenase family. In terms of assembly, forms homodimers.

It localises to the peroxisome. It catalyses the reaction 3-aminopropanal + NAD(+) + H2O = beta-alanine + NADH + 2 H(+). It carries out the reaction 4-aminobutanal + NAD(+) + H2O = 4-aminobutanoate + NADH + 2 H(+). The catalysed reaction is 4-guanidinobutanal + NAD(+) + H2O = 4-guanidinobutanoate + NADH + 2 H(+). It participates in amine and polyamine biosynthesis; betaine biosynthesis via choline pathway; betaine from betaine aldehyde: step 1/1. In terms of biological role, dehydrogenase that catalyzes the oxidation of several aminoaldehydes. Metabolizes and detoxifies aldehyde products of polyamine degradation to non-toxic amino acids. Catalyzes the oxidation of 3-aminopropanal to beta-alanine. Catalyzes the oxidation of 4-aminobutanal to 4-aminobutanoate. Catalyzes the oxidation of 4-guanidinobutanal to 4-guanidinobutanoate. This Pisum sativum (Garden pea) protein is Aminoaldehyde dehydrogenase 2, peroxisomal.